The primary structure comprises 722 residues: Protein HAPLESS 2-A (722 aa).

Residues 1–24 (MPRRRGTPLPTILLLLAFVGGACG) form the signal peptide. At 25–552 (TEILSKSRLE…LFDFGCHIQY (528 aa)) the chain is on the extracellular side. Disulfide bonds link Cys36-Cys48, Cys129-Cys159, Cys141-Cys188, Cys160-Cys315, Cys162-Cys171, Cys298-Cys322, and Cys435-Cys473. The helical transmembrane segment at 553–573 (VCIGWILLLLLIPAAVVFLWL) threads the bilayer. The Cytoplasmic segment spans residues 574-722 (LHQEGLFDPL…HRDGHYSPSV (149 aa)). The span at 598 to 641 (RRRHQKGRHHRHHHDHRHRHGHSHGDHHHHYHGGHHQRRRHHHP) shows a compositional bias: basic residues. 2 disordered regions span residues 598-665 (RRRH…RNHH) and 680-722 (RLDR…SPSV). Positions 646–662 (VEGHHHDRQQHSHEAGR) are enriched in basic and acidic residues. The segment covering 701–711 (RRSRHERHGGH) has biased composition (basic residues). Basic and acidic residues predominate over residues 712–722 (GHRDGHYSPSV).

It belongs to the HAP2/GCS1 family.

It localises to the endoplasmic reticulum membrane. The protein localises to the cell membrane. Required for male fertility. Plays a role in pollen tube guidance and successful gamete attachment. Essential for the fusion of gametes during double fertilization, where one male gamete fuses with the egg to produce a zygote, and another male gamete fuses with the central cell to produce the endosperm. Mediates the fusion of cell membranes. Not required for pollen tube outgrowth. The protein is Protein HAPLESS 2-A (HAP2A) of Oryza sativa subsp. japonica (Rice).